Consider the following 835-residue polypeptide: MNQIEQKWQYIWQEEKAFEVSNASSKPKYYVLEMLPYPSGKIHVGHVRNYSIGDVIARFMTMQGFNVLHPMGWDAFGLPAENAAIKNNSHPKKWTYSNIKNMKKQLKSMGFSYDWSREINSCDPEYYKHEQKFFLELYERNLAYQKASFVNWDPVDNTVLANEQVVDGRGWRSGAIVAKRYLKQWFLKITDYAEELLNEIQNLKEWPEAVRSMQEKWIGKSIGANFHFKIKDNEETTIEVFSTKPETIFGASFIGIAFNHPIIERLVSKTPEILAFITQCSHITRSSELEKAEKEGVFTGLFVTHPFDSNIVLPVIITNFVLMDYGTGAIFGCPAHDECDHELAVKMNLSIKQVIKADMDVQKTAYTEDGILINSDVLNGLTSNEAKQEVIGEFEKLGIGKRSVNYRLKDWGISRQRFWGCPIPMIHCEICGIVPVPYKDLPVTLPDDVNFDGHGNPLDHHPSWKHVNCPKCDKPAVRETDTFDTFFESSWYFTRYCNSNATEMTDKKACDYWLPVDKYIGGIEHAVMHLLYARFFTKVMNEQNYVSVREPFKGLFTQGMVLHATYKDEHNNWLYPEEVVKKGNEFFHKESNNRVVQGRIEKMSKSKKNLIDLETMQEQYGADAIRLFVLSDSPPEKDLEWSASGIEGCSRFINKLEYMFKAIDSLKDDVNSEVNKELNRLVHFTIKHVAEDIKHFALNRAIARMRELSNAISAEISKDKIDVKIVRHGFNVLVQLLNPFIPHITEEIWQKLGNKERLYNLSFPAFDESMLELDTYIMAVQVNGKLRDTYEFKTSVSEDEIKQVTVSLPKVQKCLEGKEPKKIILVPRKIVNILV.

Residues 36-46 carry the 'HIGH' region motif; it reads PYPSGKIHVGH. The 'KMSKS' region motif lies at 602–606; sequence KMSKS. Lys-605 is an ATP binding site.

It belongs to the class-I aminoacyl-tRNA synthetase family.

It is found in the cytoplasm. It catalyses the reaction tRNA(Leu) + L-leucine + ATP = L-leucyl-tRNA(Leu) + AMP + diphosphate. In Rickettsia peacockii (strain Rustic), this protein is Leucine--tRNA ligase.